The following is a 73-amino-acid chain: Mating-type pheromone BBP1(3) (73 aa).

The tract at residues 1 to 41 (MASSVLARPGPSTVLPAMTRPPPPMAHRAAATPSFARSSQP) is disordered. C70 bears the Cysteine methyl ester mark. A lipid anchor (S-farnesyl cysteine) is attached at C70. A propeptide spans 71–73 (VVA) (removed in mature form).

Its subcellular location is the cell membrane. Its function is as follows. Activates B-regulated development. The protein is Mating-type pheromone BBP1(3) (BBP1(3)) of Schizophyllum commune (Split gill fungus).